The chain runs to 148 residues: SsrA-binding protein (148 aa).

The segment at 119–148 (AKGKKQHDKRQSMKEADWKREKQRLIKHTR) is disordered. Residues 127 to 142 (KRQSMKEADWKREKQR) are compositionally biased toward basic and acidic residues.

The protein belongs to the SmpB family.

It is found in the cytoplasm. Functionally, required for rescue of stalled ribosomes mediated by trans-translation. Binds to transfer-messenger RNA (tmRNA), required for stable association of tmRNA with ribosomes. tmRNA and SmpB together mimic tRNA shape, replacing the anticodon stem-loop with SmpB. tmRNA is encoded by the ssrA gene; the 2 termini fold to resemble tRNA(Ala) and it encodes a 'tag peptide', a short internal open reading frame. During trans-translation Ala-aminoacylated tmRNA acts like a tRNA, entering the A-site of stalled ribosomes, displacing the stalled mRNA. The ribosome then switches to translate the ORF on the tmRNA; the nascent peptide is terminated with the 'tag peptide' encoded by the tmRNA and targeted for degradation. The ribosome is freed to recommence translation, which seems to be the essential function of trans-translation. The protein is SsrA-binding protein of Neisseria meningitidis serogroup C (strain 053442).